We begin with the raw amino-acid sequence, 508 residues long: MSARGTLWGVGLGPGDPELVTVKAARVIGEADVVAYHSAPHGHSIARGIAEPYLRPGQLEEHLVYPVTTEATNHPGGYAGALEDFYADATERIATHLDAGRNVALLAEGDPLFYSSYMHLHTRLTRRFNAVIVPGVTSVSAASAAVATPLVAGDQVLSVLPGTLPVGELTRRLADADAAVVVKLGRSYHNVREALSASGLLGDAFYVERASTAGQRVLPAADVDETSVPYFSLAMLPGGRRRALLTGTVAVVGLGPGDSDWMTPQSRRELAAATDLIGYRGYLDRVEVRDGQRRHPSDNTDEPARARLACSLADQGRAVAVVSSGDPGVFAMATAVLEEAEQWPGVRVRVIPAMTAAQAVASRVGAPLGHDYAVISLSDRLKPWDVIAARLTAAAAADLVLAIYNPASVTRTWQVGAMRELLLAHRDPGIPVVIGRNVSGPVSGPNEDVRVVKLADLNPAEIDMRCLLIVGSSQTRWYSVDSQDRVFTPRRYPEAGRATATKSSRHSD.

The tract at residues 1-243 (MSARGTLWGV…AMLPGGRRRA (243 aa)) is precorrin-2 C20-methyltransferase. The segment at 244–508 (LLTGTVAVVG…TATKSSRHSD (265 aa)) is precorrin-3 methylase. A disordered region spans residues 489–508 (PRRYPEAGRATATKSSRHSD).

It belongs to the precorrin methyltransferase family.

It catalyses the reaction precorrin-2 + S-adenosyl-L-methionine = precorrin-3A + S-adenosyl-L-homocysteine + H(+). The enzyme catalyses precorrin-3B + S-adenosyl-L-methionine = precorrin-4 + S-adenosyl-L-homocysteine + 3 H(+). Its pathway is cofactor biosynthesis; adenosylcobalamin biosynthesis; cob(II)yrinate a,c-diamide from precorrin-2 (aerobic route): step 1/10. It functions in the pathway cofactor biosynthesis; adenosylcobalamin biosynthesis; cob(II)yrinate a,c-diamide from precorrin-2 (aerobic route): step 3/10. In terms of biological role, methylates precorrin-2 at the C-20 position to produce precorrin-3A. The polypeptide is Cobalamin biosynthesis protein CobIJ (cobIJ) (Mycobacterium bovis (strain ATCC BAA-935 / AF2122/97)).